The sequence spans 96 residues: MLNVSEYFDGKVKSIGFESASAGRASVGVMAEGEYTFATAQAEEMTVVSGSLKVLLTGETDWKWYQAGEAFNVPGHSEFYLQVAEPTAYLCRYLKD.

It belongs to the nucleoside phosphorylase PpnP family.

The catalysed reaction is a purine D-ribonucleoside + phosphate = a purine nucleobase + alpha-D-ribose 1-phosphate. It catalyses the reaction adenosine + phosphate = alpha-D-ribose 1-phosphate + adenine. It carries out the reaction cytidine + phosphate = cytosine + alpha-D-ribose 1-phosphate. The enzyme catalyses guanosine + phosphate = alpha-D-ribose 1-phosphate + guanine. The catalysed reaction is inosine + phosphate = alpha-D-ribose 1-phosphate + hypoxanthine. It catalyses the reaction thymidine + phosphate = 2-deoxy-alpha-D-ribose 1-phosphate + thymine. It carries out the reaction uridine + phosphate = alpha-D-ribose 1-phosphate + uracil. The enzyme catalyses xanthosine + phosphate = alpha-D-ribose 1-phosphate + xanthine. Its function is as follows. Catalyzes the phosphorolysis of diverse nucleosides, yielding D-ribose 1-phosphate and the respective free bases. Can use uridine, adenosine, guanosine, cytidine, thymidine, inosine and xanthosine as substrates. Also catalyzes the reverse reactions. The sequence is that of Pyrimidine/purine nucleoside phosphorylase from Erwinia tasmaniensis (strain DSM 17950 / CFBP 7177 / CIP 109463 / NCPPB 4357 / Et1/99).